The chain runs to 909 residues: Protein translocase subunit SecA (909 aa).

ATP contacts are provided by residues glutamine 87, 105–109 (GEGKT), and aspartate 507. Disordered regions lie at residues 567–586 (RRID…PGSS) and 859–909 (YSEA…GKLD). Positions 865–889 (EHQSVTEGHEAKQQPFVRKSDKIGR) are enriched in basic and acidic residues. Zn(2+) is bound by residues cysteine 893, cysteine 895, cysteine 904, and histidine 905. The span at 899–909 (RKYKQCHGKLD) shows a compositional bias: basic residues.

Belongs to the SecA family. As to quaternary structure, monomer and homodimer. Part of the essential Sec protein translocation apparatus which comprises SecA, SecYEG and auxiliary proteins SecDF-YajC and YidC. Requires Zn(2+) as cofactor.

It localises to the cell inner membrane. Its subcellular location is the cytoplasm. It carries out the reaction ATP + H2O + cellular proteinSide 1 = ADP + phosphate + cellular proteinSide 2.. Functionally, part of the Sec protein translocase complex. Interacts with the SecYEG preprotein conducting channel. Has a central role in coupling the hydrolysis of ATP to the transfer of proteins into and across the cell membrane, serving both as a receptor for the preprotein-SecB complex and as an ATP-driven molecular motor driving the stepwise translocation of polypeptide chains across the membrane. The protein is Protein translocase subunit SecA of Nitrosomonas eutropha (strain DSM 101675 / C91 / Nm57).